Reading from the N-terminus, the 543-residue chain is GPI mannosyltransferase 4 (543 aa).

5 helical membrane-spanning segments follow: residues 5–25 (TYLLLLVIRVYFALSPSYLHP), 98–118 (VMFLLGFVLEDWAVYELVPFA), 176–196 (LAFIAVAGVFNRITFPAFLAI), 213–233 (PVSLFSFVGFGIFFFGIAVLV), and 353–373 (LFLAVWMIFNAALGFLMGIYH). Residue asparagine 428 is glycosylated (N-linked (GlcNAc...) asparagine).

Belongs to the glycosyltransferase 22 family. PIGZ subfamily.

The protein resides in the endoplasmic reticulum membrane. The protein operates within glycolipid biosynthesis; glycosylphosphatidylinositol-anchor biosynthesis. Its function is as follows. Alpha-1,2-mannosyltransferase involved in glycosylphosphatidylinositol-anchor biosynthesis. Transfers a fourth mannose to trimannosyl-GPIs during GPI precursor assembly. The presence of a fourth mannose in GPI is essential in fungi. The chain is GPI mannosyltransferase 4 (smp3) from Aspergillus oryzae (strain ATCC 42149 / RIB 40) (Yellow koji mold).